The primary structure comprises 279 residues: MIGFIGSVFSPWYRWSGRKEPQNHCCLNVATYGPGGRFTMTDRGRAALRQSPDTLTVGPSRMHWTGTQLIVEVNEISSPPLVSPVKGRIVLTPTGITDVEVTLKDDGSHIWRPFAPTARIEVDLTQGHRWHGHGYFDANFGTAALEADFRFWTWGRYPVADGAACFYDATRRDGSRLELGLHVAADGRARLIQPPPEARFARSRWLVERHTPADPGTRPRQVMSMLDAPFYSRAMVETTVFGQKTVGVHEALDLRRFRSPLLMPMLAVRVPRRPGWSFS.

Belongs to the CrtC hydratase family.

The catalysed reaction is rhodopin = all-trans-lycopene + H2O. It carries out the reaction 1-hydroxy-all-trans-1,2-dihydro-neurosporene = all-trans-neurosporene + H2O. The protein operates within carotenoid biosynthesis; spheroidene biosynthesis. Functionally, involved in the biosynthesis of carotenoids spheroidene and spirilloxanthin. Catalyzes the hydration of neurosporene to the corresponding hydroxylated carotenoids 1-HO-neurosporene and that of lycopene to 1-HO-lycopene. The sequence is that of Acyclic carotenoid 1,2-hydratase (crtC) from Cereibacter sphaeroides (strain ATCC 17023 / DSM 158 / JCM 6121 / CCUG 31486 / LMG 2827 / NBRC 12203 / NCIMB 8253 / ATH 2.4.1.) (Rhodobacter sphaeroides).